We begin with the raw amino-acid sequence, 415 residues long: Serine--tRNA ligase (415 aa).

Residue 231–233 (TAE) participates in L-serine binding. Residue 262–264 (RSE) participates in ATP binding. L-serine is bound at residue Glu285. ATP is bound at residue 349–352 (EISS). Ser383 provides a ligand contact to L-serine.

This sequence belongs to the class-II aminoacyl-tRNA synthetase family. Type-1 seryl-tRNA synthetase subfamily. Homodimer. The tRNA molecule binds across the dimer.

The protein resides in the cytoplasm. The enzyme catalyses tRNA(Ser) + L-serine + ATP = L-seryl-tRNA(Ser) + AMP + diphosphate + H(+). It catalyses the reaction tRNA(Sec) + L-serine + ATP = L-seryl-tRNA(Sec) + AMP + diphosphate + H(+). It participates in aminoacyl-tRNA biosynthesis; selenocysteinyl-tRNA(Sec) biosynthesis; L-seryl-tRNA(Sec) from L-serine and tRNA(Sec): step 1/1. Functionally, catalyzes the attachment of serine to tRNA(Ser). Is also able to aminoacylate tRNA(Sec) with serine, to form the misacylated tRNA L-seryl-tRNA(Sec), which will be further converted into selenocysteinyl-tRNA(Sec). The protein is Serine--tRNA ligase of Helicobacter pylori (strain P12).